The chain runs to 268 residues: NAD kinase (268 aa).

Catalysis depends on D45, which acts as the Proton acceptor. NAD(+) is bound by residues 45–46 (DG), 122–123 (NE), R148, D150, 161–166 (TAYGKS), A185, and Q223.

It belongs to the NAD kinase family. The cofactor is a divalent metal cation.

It localises to the cytoplasm. The catalysed reaction is NAD(+) + ATP = ADP + NADP(+) + H(+). Its function is as follows. Involved in the regulation of the intracellular balance of NAD and NADP, and is a key enzyme in the biosynthesis of NADP. Catalyzes specifically the phosphorylation on 2'-hydroxyl of the adenosine moiety of NAD to yield NADP. The sequence is that of NAD kinase from Latilactobacillus sakei subsp. sakei (strain 23K) (Lactobacillus sakei subsp. sakei).